The following is a 100-amino-acid chain: Urease subunit gamma (100 aa).

This sequence belongs to the urease gamma subunit family. As to quaternary structure, heterotrimer of UreA (gamma), UreB (beta) and UreC (alpha) subunits. Three heterotrimers associate to form the active enzyme.

The protein resides in the cytoplasm. The enzyme catalyses urea + 2 H2O + H(+) = hydrogencarbonate + 2 NH4(+). The protein operates within nitrogen metabolism; urea degradation; CO(2) and NH(3) from urea (urease route): step 1/1. In Rhodopseudomonas palustris (strain BisA53), this protein is Urease subunit gamma.